The following is a 210-amino-acid chain: dTTP/UTP pyrophosphatase (210 aa).

The active-site Proton acceptor is Asp-89.

The protein belongs to the Maf family. YhdE subfamily. The cofactor is a divalent metal cation.

It is found in the cytoplasm. It carries out the reaction dTTP + H2O = dTMP + diphosphate + H(+). The enzyme catalyses UTP + H2O = UMP + diphosphate + H(+). Functionally, nucleoside triphosphate pyrophosphatase that hydrolyzes dTTP and UTP. May have a dual role in cell division arrest and in preventing the incorporation of modified nucleotides into cellular nucleic acids. The sequence is that of dTTP/UTP pyrophosphatase from Burkholderia lata (strain ATCC 17760 / DSM 23089 / LMG 22485 / NCIMB 9086 / R18194 / 383).